The chain runs to 2282 residues: Protein Ycf2 (2282 aa).

1637–1644 provides a ligand contact to ATP; the sequence is GSIGTGRS.

The protein belongs to the Ycf2 family.

The protein resides in the plastid. Its subcellular location is the chloroplast stroma. Functionally, probable ATPase of unknown function. Its presence in a non-photosynthetic plant (Epifagus virginiana) and experiments in tobacco indicate that it has an essential function which is probably not related to photosynthesis. This chain is Protein Ycf2, found in Citrus sinensis (Sweet orange).